Consider the following 294-residue polypeptide: UPF0761 membrane protein YPTS_0028 (294 aa).

The next 7 membrane-spanning stretches (helical) occupy residues 44-64 (LLSL…FPMF), 67-87 (ISIK…GDII), 108-128 (GLIV…NIIW), 136-156 (LVFS…LVGA), 185-205 (VFPL…VPTV), 212-232 (ALIG…GFAM), and 246-266 (VLAV…IVLL).

The protein belongs to the UPF0761 family.

The protein localises to the cell inner membrane. The sequence is that of UPF0761 membrane protein YPTS_0028 from Yersinia pseudotuberculosis serotype IB (strain PB1/+).